A 415-amino-acid chain; its full sequence is Phosphoribosylamine--glycine ligase (415 aa).

One can recognise an ATP-grasp domain in the interval 108–311 (KKIMEKYNIP…LMQHIIDLDE (204 aa)). 134 to 191 (IENCEFPVVVKKDGLAAGKGVIIADTIEAARSAIEIMYGDEEEGTVVFETFLEGEEFS) is a binding site for ATP. Glutamate 281 and asparagine 283 together coordinate Mg(2+).

The protein belongs to the GARS family. Requires Mg(2+) as cofactor. The cofactor is Mn(2+).

The enzyme catalyses 5-phospho-beta-D-ribosylamine + glycine + ATP = N(1)-(5-phospho-beta-D-ribosyl)glycinamide + ADP + phosphate + H(+). The protein operates within purine metabolism; IMP biosynthesis via de novo pathway; N(1)-(5-phospho-D-ribosyl)glycinamide from 5-phospho-alpha-D-ribose 1-diphosphate: step 2/2. In Staphylococcus aureus (strain MRSA252), this protein is Phosphoribosylamine--glycine ligase.